The primary structure comprises 349 residues: Farnesyl pyrophosphate synthase vrtD (349 aa).

3 residues coordinate isopentenyl diphosphate: Lys-53, Arg-56, and Gln-92. Mg(2+) contacts are provided by Asp-99 and Asp-103. Residue Arg-108 participates in dimethylallyl diphosphate binding. Arg-109 is an isopentenyl diphosphate binding site. Lys-196, Thr-197, Gln-236, Lys-253, and Lys-262 together coordinate dimethylallyl diphosphate.

Belongs to the FPP/GGPP synthase family. Mg(2+) serves as cofactor.

The catalysed reaction is isopentenyl diphosphate + dimethylallyl diphosphate = (2E)-geranyl diphosphate + diphosphate. The enzyme catalyses isopentenyl diphosphate + (2E)-geranyl diphosphate = (2E,6E)-farnesyl diphosphate + diphosphate. The protein operates within secondary metabolite biosynthesis; terpenoid biosynthesis. In terms of biological role, farnesyl pyrophosphate synthase; part of the gene cluster that mediates the biosynthesis of viridicatumtoxin, a tetracycline-like fungal meroterpenoid with a unique, fused spirobicyclic ring system. The first step of the pathway is the production of the malonamoyl-CoA starter unit for the polyketide synthase vrtA. The aldolase vrtJ may be involved in the synthesis of the malonamate substrate for malonamoyl-CoA synthetase vrtB. The polyketide synthase vrtA then may utilize the malonamoyl-CoA starter unit, followed by sequential condensation of eight malonyl-CoA units to form the polyketide backbone. The cyclization of the last ring could be mediated by the lactamase-like protein vrtG. The proposed post-PKS tailoring steps are a hydroxylation at C5 catalyzed the cytochrome P450 monooxygenase vrtE, a hydroxylation at C12a catalyzed by VrtH and/or VrtI, and an O-methylation by the O-methyltransferase vrtF. VrtC is then proposed to catalyze the transfer of a geranyl group synthesized by vrtD to the aromatic C ring of the tetracyclic polyketide intermediate of viridicatumtoxin to yield previridicatumtoxin. Finally, the cytochrome P450 monooxygenase vrtK catalyzes the spirocyclization of the geranyl moiety of previridicatumtoxin to afford viridicatumtoxin. The chain is Farnesyl pyrophosphate synthase vrtD from Penicillium aethiopicum.